The primary structure comprises 504 residues: 2,3-bisphosphoglycerate-independent phosphoglycerate mutase (504 aa).

Positions 11 and 61 each coordinate Mn(2+). Ser61 functions as the Phosphoserine intermediate in the catalytic mechanism. Residues His122, 152–153 (RD), Arg183, Arg189, 255–258 (RNDR), and Lys329 each bind substrate. 5 residues coordinate Mn(2+): Asp396, His400, Asp437, His438, and His455.

This sequence belongs to the BPG-independent phosphoglycerate mutase family. As to quaternary structure, monomer. Requires Mn(2+) as cofactor.

It carries out the reaction (2R)-2-phosphoglycerate = (2R)-3-phosphoglycerate. The protein operates within carbohydrate degradation; glycolysis; pyruvate from D-glyceraldehyde 3-phosphate: step 3/5. Catalyzes the interconversion of 2-phosphoglycerate and 3-phosphoglycerate. The protein is 2,3-bisphosphoglycerate-independent phosphoglycerate mutase of Bacteroides thetaiotaomicron (strain ATCC 29148 / DSM 2079 / JCM 5827 / CCUG 10774 / NCTC 10582 / VPI-5482 / E50).